The primary structure comprises 435 residues: Methylenetetrahydrofolate--tRNA-(uracil-5-)-methyltransferase TrmFO (435 aa).

7–12 (GAGLAG) contacts FAD.

It belongs to the MnmG family. TrmFO subfamily. FAD serves as cofactor.

It localises to the cytoplasm. It catalyses the reaction uridine(54) in tRNA + (6R)-5,10-methylene-5,6,7,8-tetrahydrofolate + NADH + H(+) = 5-methyluridine(54) in tRNA + (6S)-5,6,7,8-tetrahydrofolate + NAD(+). It carries out the reaction uridine(54) in tRNA + (6R)-5,10-methylene-5,6,7,8-tetrahydrofolate + NADPH + H(+) = 5-methyluridine(54) in tRNA + (6S)-5,6,7,8-tetrahydrofolate + NADP(+). Its function is as follows. Catalyzes the folate-dependent formation of 5-methyl-uridine at position 54 (M-5-U54) in all tRNAs. This chain is Methylenetetrahydrofolate--tRNA-(uracil-5-)-methyltransferase TrmFO, found in Thermotoga sp. (strain RQ2).